We begin with the raw amino-acid sequence, 584 residues long: Vesicular glutamate transporter 2.1 (584 aa).

Over 1-70 the chain is Cytoplasmic; it reads METPREPAGF…CTCFGLPRRY (70 aa). The helical transmembrane segment at 71-91 threads the bilayer; it reads IIAIMSGLGFCISFGIRCNLG. Residues 92 to 124 are Vesicular-facing; that stretch reads VAIVSMVNNSTIHLNGKIIIKEKAKFNWDPETV. Residues Asn99 and Asn100 are each glycosylated (N-linked (GlcNAc...) asparagine). A helical membrane pass occupies residues 125–145; it reads GLIHGSFFWGYIVTQIPGGYI. Topologically, residues 146 to 148 are cytoplasmic; it reads SSR. Residues 149 to 169 traverse the membrane as a helical segment; the sequence is LAANRVFGAAILLTSTLNMFI. Residues 170–177 lie on the Vesicular side of the membrane; sequence PSAARGHY. Residues 178-198 form a helical membrane-spanning segment; sequence GCVIFVRILQGLVEGVTYPAC. Residues 199–216 lie on the Cytoplasmic side of the membrane; the sequence is HGIWSKWAPPLERSRLAT. The helical transmembrane segment at 217–237 threads the bilayer; the sequence is TSFCGSYAGAVIAMPLAGILV. Over 238 to 244 the chain is Vesicular; that stretch reads QYTGWSS. The chain crosses the membrane as a helical span at residues 245–265; it reads VFYVYGCFGIFWYMFWILVSY. Residues 266–310 are Cytoplasmic-facing; it reads ESPAEHPTITAEERCYIEESIGESAKLLGPADKFKTPWRKFFTSM. The chain crosses the membrane as a helical span at residues 311-331; it reads PVYAIIVANFCRSWTFYLLLI. Residues 332–349 are Vesicular-facing; that stretch reads SQPAYFEEVFGFEISKVG. Residues 350 to 370 traverse the membrane as a helical segment; that stretch reads MLSALPHLVMTIIVPIGGQLA. Residues 371–386 are Cytoplasmic-facing; that stretch reads DHLRSKNILSTTTVRK. A helical membrane pass occupies residues 387–407; sequence IMNCGGFGMEATLLLIVGYSH. Residues 408-409 lie on the Vesicular side of the membrane; that stretch reads SK. The helical transmembrane segment at 410 to 430 threads the bilayer; sequence GVAISFLVLAVGFSGFAISGF. The Cytoplasmic segment spans residues 431–445; sequence NVNHLDIAPRYASIL. Residues 446–466 traverse the membrane as a helical segment; it reads MGISNGVGTLSGMVCPLIVGA. The Vesicular portion of the chain corresponds to 467–477; it reads MTKHKTREEWQ. The chain crosses the membrane as a helical span at residues 478–498; sequence YVFLIASLVHYGGVIFYGIFA. The Cytoplasmic portion of the chain corresponds to 499-584; sequence SGEKQPWADP…YGYRQGGNYS (86 aa).

It belongs to the major facilitator superfamily. Sodium/anion cotransporter family. VGLUT subfamily. In terms of tissue distribution, expressed in spinal cord and retinal ganglion cells.

The protein resides in the cytoplasmic vesicle. The protein localises to the secretory vesicle. It is found in the synaptic vesicle membrane. It localises to the membrane. Its subcellular location is the synapse. The protein resides in the synaptosome. The protein localises to the cell membrane. The enzyme catalyses L-glutamate(out) = L-glutamate(in). It carries out the reaction 3 Na(+)(out) + phosphate(out) = 3 Na(+)(in) + phosphate(in). It catalyses the reaction phosphate(in) = phosphate(out). The catalysed reaction is K(+)(in) + H(+)(out) = K(+)(out) + H(+)(in). The enzyme catalyses chloride(in) = chloride(out). With respect to regulation, chloride channel activity is allosterically activated by lumenal H(+) and Cl(-) leading to synaptic vesicles acidification. The L-glutamate transport activity is allosterically activated by lumenal H(+) and Cl(-). The allosteric requirement for H(+) efficiently prevents non-vesicular efflux across the plasma membrane. The L-glutamate uniporter activity exhibits a biphasic dependence on chloride concentration. Functionally, multifunctional transporter that transports L-glutamate as well as multiple ions such as chloride, proton, potassium, sodium and phosphate. At the synaptic vesicle membrane, mainly functions as a uniporter which transports preferentially L-glutamate but also, phosphate from the cytoplasm into synaptic vesicles at presynaptic nerve terminals of excitatory neural cells. The L-glutamate or phosphate uniporter activity is electrogenic and is driven by the proton electrochemical gradient, mainly by the electrical gradient established by the vacuolar H(+)-ATPase across the synaptic vesicle membrane. In addition, functions as a chloride channel that allows a chloride permeation through the synaptic vesicle membrane therefore affects the proton electrochemical gradient and promotes synaptic vesicles acidification. Moreover, functions as a vesicular K(+)/H(+) antiport allowing to maintain the electrical gradient and to decrease chemical gradient and therefore sustain vesicular L-glutamate uptake. The vesicular H(+)/H(+) antiport activity is electroneutral. At the plasma membrane, following exocytosis, functions as a symporter of Na(+) and phosphate from the extracellular space to the cytoplasm allowing synaptic phosphate homeostasis regulation. The symporter activity is driven by an inside negative membrane potential and is electrogenic. Also involved in the regulation of retinal hyaloid vessel regression during postnatal development. May also play a role in the endocrine L-glutamatergic system of other tissues such as pineal gland and pancreas. Required for glutamate release by retinotectal synapses and visual acuity. This Danio rerio (Zebrafish) protein is Vesicular glutamate transporter 2.1 (slc17a6b).